The primary structure comprises 106 residues: Iron-sulfur cluster assembly protein CyaY (106 aa).

This sequence belongs to the frataxin family.

Its function is as follows. Involved in iron-sulfur (Fe-S) cluster assembly. May act as a regulator of Fe-S biogenesis. In Photorhabdus laumondii subsp. laumondii (strain DSM 15139 / CIP 105565 / TT01) (Photorhabdus luminescens subsp. laumondii), this protein is Iron-sulfur cluster assembly protein CyaY.